The primary structure comprises 151 residues: Ribonuclease P protein component (151 aa).

The interval 1–62 (MDEKDLATQP…LKGDSAFRRL (62 aa)) is disordered. Positions 28–48 (GAQGAEAQAAEGPLAAHAQGA) are enriched in low complexity.

It belongs to the RnpA family. In terms of assembly, consists of a catalytic RNA component (M1 or rnpB) and a protein subunit.

The enzyme catalyses Endonucleolytic cleavage of RNA, removing 5'-extranucleotides from tRNA precursor.. RNaseP catalyzes the removal of the 5'-leader sequence from pre-tRNA to produce the mature 5'-terminus. It can also cleave other RNA substrates such as 4.5S RNA. The protein component plays an auxiliary but essential role in vivo by binding to the 5'-leader sequence and broadening the substrate specificity of the ribozyme. This Thermus oshimai protein is Ribonuclease P protein component.